We begin with the raw amino-acid sequence, 205 residues long: Putative 3-methyladenine DNA glycosylase (205 aa).

Belongs to the DNA glycosylase MPG family.

The chain is Putative 3-methyladenine DNA glycosylase from Mycolicibacterium paratuberculosis (strain ATCC BAA-968 / K-10) (Mycobacterium paratuberculosis).